Here is a 219-residue protein sequence, read N- to C-terminus: Ras-related protein Rab-3B (219 aa).

N-acetylalanine is present on alanine 2. The GTP site is built by serine 31, serine 32, valine 33, glycine 34, lysine 35, threonine 36, serine 37, proline 49, and serine 53. A Mg(2+)-binding site is contributed by threonine 36. The Switch 1 motif lies at 45–58 (DTFTPAFVSTVGID). The Mg(2+) site is built by threonine 54 and aspartate 77. The short motif at 78–96 (TAGQERYRTITTAYYRGAM) is the Switch 2 element. Residue glycine 80 participates in GTP binding. The residue at position 86 (threonine 86) is a Phosphothreonine. GTP is bound by residues asparagine 135, lysine 136, aspartate 138, alanine 166, and lysine 167. Serine 188 and serine 190 each carry phosphoserine. Residues cysteine 217 and cysteine 219 are each lipidated (S-geranylgeranyl cysteine). A Cysteine methyl ester modification is found at cysteine 219.

It belongs to the small GTPase superfamily. Rab family. In terms of assembly, interacts with RPH3A and RPH3AL. Interacts with RIMS1. Interacts with RIMS2. The GTP-bound form interacts with GAS8/DRC4 (via coiled-coil domains). Interacts with GDI2, and CHM; phosphorylation at Thr-86 disrupts these interactions. Interacts with MADD (via uDENN domain); the GTP-bound form is preferred for interaction. Mg(2+) is required as a cofactor. Post-translationally, phosphorylation of Thr-86 in the switch II region by LRRK2 prevents the association of RAB regulatory proteins, including CHM and RAB GDP dissociation inhibitor GDI2.

It localises to the cell membrane. It is found in the golgi apparatus. It catalyses the reaction GTP + H2O = GDP + phosphate + H(+). With respect to regulation, regulated by guanine nucleotide exchange factors (GEFs) which promote the exchange of bound GDP for free GTP. Regulated by GTPase activating proteins (GAPs) which increase the GTP hydrolysis activity. Inhibited by GDP dissociation inhibitors (GDIs) which prevent Rab-GDP dissociation. In terms of biological role, the small GTPases Rab are key regulators of intracellular membrane trafficking, from the formation of transport vesicles to their fusion with membranes. Rabs cycle between an inactive GDP-bound form and an active GTP-bound form that is able to recruit to membranes different sets of downstream effectors directly responsible for vesicle formation, movement, tethering and fusion. In Rattus norvegicus (Rat), this protein is Ras-related protein Rab-3B.